The primary structure comprises 1164 residues: Integrin alpha-5 (1164 aa).

Residues 1 to 14 (MREEGGGSREKEGE) show a composition bias toward basic and acidic residues. The interval 1 to 119 (MREEGGGSRE…MGSRTPGSPL (119 aa)) is disordered. The segment covering 81–90 (LLPALSHSPL) has biased composition (low complexity). Residues 156–221 (NLDAEAPAVL…CPWGTSPAQC (66 aa)) form an FG-GAP 1 repeat. The N-linked (GlcNAc...) asparagine glycan is linked to N197. Cysteines 212 and 221 form a disulfide. S240 carries the phosphoserine modification. FG-GAP repeat units follow at residues 241 to 301 (SEGE…QILE), 306 to 358 (RSDF…AESY), 372 to 424 (QTRQ…GSDI), 425 to 490 (RSLY…GMEP), 491 to 550 (TPTL…GLAS), and 554 to 617 (QVLL…IFPA). C269 and C289 are disulfide-bonded. N-linked (GlcNAc...) asparagine glycosylation occurs at N295. Cysteines 305 and 318 form a disulfide. Residues Q375 and D382 each coordinate a protein. Ca(2+) contacts are provided by E393, S395, D397, and D401. N410, N420, and N429 each carry an N-linked (GlcNAc...) asparagine glycan. 15 residues coordinate Ca(2+): D447, N449, D451, L453, D455, D514, D516, D518, Y520, D522, D578, D580, N582, Y584, and D586. The cysteines at positions 626 and 635 are disulfide-linked. 4 N-linked (GlcNAc...) asparagine glycosylation sites follow: N637, N643, N706, and N722. C641 and C697 are oxidised to a cystine. C758 and C764 form a disulfide bridge. N-linked (GlcNAc...) asparagine glycans are attached at residues N788, N825, N837, N886, and N982. Cysteines 831 and 844 form a disulfide. Intrachain disulfides connect C962–C1072, C983–C1036, and C1026–C1031. A disordered region spans residues 983 to 1022 (CTTSHPPNPEGLELDPEGSQHHRLQRRDVPGRSPASSGPQ). A helical membrane pass occupies residues 1114–1134 (LWIIILAILIGLLLLGLLIYI). Residues 1135 to 1164 (LYKLGFFKRSLPYGTAMEKAQLKPPATSDA) are Cytoplasmic-facing. The segment at 1136-1143 (YKLGFFKR) is interaction with HPS5. The GFFKR motif motif lies at 1139–1143 (GFFKR).

This sequence belongs to the integrin alpha chain family. As to quaternary structure, heterodimer of an alpha and a beta subunit. The alpha subunit is composed of a heavy and a light chain linked by a disulfide bond. Alpha-5 associates with beta-1. Interacts with NISCH. Interacts with HPS5. Interacts with RAB21 and COMP. Interacts with CIB1. ITGA5:ITGB1 interacts with CCN3. ITGA5:ITGB1 interacts with FBN1. ITGA5:ITGB1 interacts with IL1B. ITGA5:ITGB1 interacts with ACE2. ITGA5:ITGB1 interacts with SELP. Interacts with ANGPT2. ITGA5:ITGB1 interacts with IGFBP2. ITGA5:ITGB1 interacts with IGFBP1. Proteolytic cleavage by PCSK5 mediates activation of the precursor.

The protein localises to the cell membrane. It is found in the cell junction. It localises to the focal adhesion. Functionally, integrin alpha-5/beta-1 (ITGA5:ITGB1) is a receptor for fibronectin and fibrinogen. It recognizes the sequence R-G-D in its ligands. ITGA5:ITGB1 binds to PLA2G2A via a site (site 2) which is distinct from the classical ligand-binding site (site 1) and this induces integrin conformational changes and enhanced ligand binding to site 1. ITGA5:ITGB1 acts as a receptor for fibrillin-1 (FBN1) and mediates R-G-D-dependent cell adhesion to FBN1. ITGA5:ITGB1 acts as a receptor for fibronectin (FN1) and mediates R-G-D-dependent cell adhesion to FN1. ITGA5:ITGB1 is a receptor for IL1B and binding is essential for IL1B signaling. ITGA5:ITGB3 is a receptor for soluble CD40LG and is required for CD40/CD40LG signaling. This is Integrin alpha-5 (ITGA5) from Bos taurus (Bovine).